We begin with the raw amino-acid sequence, 126 residues long: Small ribosomal subunit protein bS6 (126 aa).

This sequence belongs to the bacterial ribosomal protein bS6 family.

Binds together with bS18 to 16S ribosomal RNA. This chain is Small ribosomal subunit protein bS6, found in Actinobacillus succinogenes (strain ATCC 55618 / DSM 22257 / CCUG 43843 / 130Z).